The primary structure comprises 165 residues: Large ribosomal subunit protein uL11 (165 aa).

A Phosphoserine modification is found at S38. A Glycyl lysine isopeptide (Lys-Gly) (interchain with G-Cter in SUMO2) cross-link involves residue K40. Residue K48 forms a Glycyl lysine isopeptide (Lys-Gly) (interchain with G-Cter in ubiquitin) linkage. K54 carries the N6-acetyllysine modification. A Glycyl lysine isopeptide (Lys-Gly) (interchain with G-Cter in ubiquitin) cross-link involves residue K83. Position 165 is a phosphoserine (S165).

Belongs to the universal ribosomal protein uL11 family. Component of the large ribosomal subunit. Mature ribosomes consist of a small (40S) and a large (60S) subunit. The 40S subunit contains about 33 different proteins and 1 molecule of RNA (18S). The 60S subunit contains about 49 different proteins and 3 molecules of RNA (28S, 5.8S and 5S). Post-translationally, ubiquitinated at Lys-48 and Lys-83 by RNF14 and RNF25 in response to ribosome collisions (ribosome stalling).

The protein localises to the cytoplasm. Its function is as follows. Component of the large ribosomal subunit. The ribosome is a large ribonucleoprotein complex responsible for the synthesis of proteins in the cell. Binds directly to 26S ribosomal RNA. The protein is Large ribosomal subunit protein uL11 (Rpl12) of Mus musculus (Mouse).